The chain runs to 186 residues: Ribosome-recycling factor (186 aa).

Belongs to the RRF family.

It is found in the cytoplasm. Responsible for the release of ribosomes from messenger RNA at the termination of protein biosynthesis. May increase the efficiency of translation by recycling ribosomes from one round of translation to another. This chain is Ribosome-recycling factor, found in Coprothermobacter proteolyticus (strain ATCC 35245 / DSM 5265 / OCM 4 / BT).